The primary structure comprises 678 residues: PTS system glucose-specific EIICBA component (678 aa).

The PTS EIIC type-1 domain occupies 3 to 414; the sequence is KKLFGQLQRI…FKYKTPGRED (412 aa). 11 consecutive transmembrane segments (helical) span residues 16–36, 63–83, 89–109, 126–146, 170–190, 211–231, 273–293, 303–323, 329–349, 355–375, and 382–402; these read LMLP…GTAM, AGGI…AIGL, VAAI…GAFL, VLGI…GALA, FVPI…AWIW, LAVF…LHHI, FMQG…LAIY, VVAG…ITEP, LFVA…SFLI, VHLG…GVLP, and LVIP…RFLI. Residues 425-506 form the PTS EIIB type-1 domain; the sequence is SELPFNVLKA…SLIMKGEITK (82 aa). Cys447 functions as the Phosphocysteine intermediate; for EIIB activity in the catalytic mechanism. Positions 547-651 constitute a PTS EIIA type-1 domain; it reads DQVFAQKMMG…STVTPLIITN (105 aa). His599 (tele-phosphohistidine intermediate; for EIIA activity) is an active-site residue.

The protein localises to the cell membrane. The enzyme catalyses N(pros)-phospho-L-histidyl-[protein] + D-glucose(out) = D-glucose 6-phosphate(in) + L-histidyl-[protein]. Functionally, the phosphoenolpyruvate-dependent sugar phosphotransferase system (sugar PTS), a major carbohydrate active transport system, catalyzes the phosphorylation of incoming sugar substrates concomitantly with their translocation across the cell membrane. This system is involved in glucose transport. The polypeptide is PTS system glucose-specific EIICBA component (ptsG) (Staphylococcus saprophyticus subsp. saprophyticus (strain ATCC 15305 / DSM 20229 / NCIMB 8711 / NCTC 7292 / S-41)).